The chain runs to 261 residues: Phosphatidylglycerol--prolipoprotein diacylglyceryl transferase (261 aa).

Transmembrane regions (helical) follow at residues Ile12–Ala32, Ile41–Ala61, Gly87–Phe107, and Leu112–Ile132. Arg134 lines the a 1,2-diacyl-sn-glycero-3-phospho-(1'-sn-glycerol) pocket. Transmembrane regions (helical) follow at residues Gln170–Leu190, Gly200–Met220, and Gly229–Ile249.

The protein belongs to the Lgt family.

It localises to the cell membrane. The enzyme catalyses L-cysteinyl-[prolipoprotein] + a 1,2-diacyl-sn-glycero-3-phospho-(1'-sn-glycerol) = an S-1,2-diacyl-sn-glyceryl-L-cysteinyl-[prolipoprotein] + sn-glycerol 1-phosphate + H(+). It functions in the pathway protein modification; lipoprotein biosynthesis (diacylglyceryl transfer). In terms of biological role, catalyzes the transfer of the diacylglyceryl group from phosphatidylglycerol to the sulfhydryl group of the N-terminal cysteine of a prolipoprotein, the first step in the formation of mature lipoproteins. The polypeptide is Phosphatidylglycerol--prolipoprotein diacylglyceryl transferase (Streptococcus sanguinis (strain SK36)).